The following is a 455-amino-acid chain: Inactive peptidyl-prolyl cis-trans isomerase shutdown (455 aa).

A disordered region spans residues 34-54 (SQQNHARDLGLDSDSDSDYED). Acidic residues predominate over residues 44–54 (LDSDSDSDYED). The region spanning 103–192 (KARVSVRYSG…LFKVEVIDYS (90 aa)) is the PPIase FKBP-type domain. TPR repeat units follow at residues 218 to 251 (AVDLHLHGKDSVKLGRYQSAATAFERAVSSLNYC) and 303 to 336 (CKALFQEGRALAALGEYNLARNAYLQAQAKQPAN).

Belongs to the FKBP6 family. Interacts with Hsp83. Strongly expressed in the germline stem cells and in 16-cell cysts. Present in the germ cells throughout embryogenesis. Defects are due to derepression of transposable elements and impaired piRNA biogenesis.

It localises to the cytoplasm. Its subcellular location is the cytoplasmic ribonucleoprotein granule. Functionally, co-chaperone required during oogenesis to repress transposable elements and prevent their mobilization, which is essential for the germline integrity. Acts via the piRNA metabolic process, which mediates the repression of transposable elements during meiosis by forming complexes composed of piRNAs and Piwi proteins and govern the methylation and subsequent repression of transposons. Acts as a co-chaperone via its interaction with Hsp83/HSP90 and is required for the biogenesis of all three piRNA major populations. This chain is Inactive peptidyl-prolyl cis-trans isomerase shutdown, found in Drosophila melanogaster (Fruit fly).